The chain runs to 122 residues: Large ribosomal subunit protein uL14c (122 aa).

Belongs to the universal ribosomal protein uL14 family. In terms of assembly, part of the 50S ribosomal subunit.

It localises to the plastid. It is found in the chloroplast. In terms of biological role, binds to 23S rRNA. This is Large ribosomal subunit protein uL14c from Gossypium barbadense (Sea Island cotton).